We begin with the raw amino-acid sequence, 94 residues long: Progonadoliberin-3 (94 aa).

The signal sequence occupies residues 1 to 23; it reads MEGKGRVLVQLLMLACVLEVSLC. Glutamine 24 bears the Pyrrolidone carboxylic acid mark. Glycine 33 is subject to Glycine amide.

It belongs to the GnRH family.

It is found in the secreted. Stimulates the secretion of gonadotropins. The protein is Progonadoliberin-3 (gnrh3) of Carassius auratus (Goldfish).